Here is a 204-residue protein sequence, read N- to C-terminus: Holliday junction branch migration complex subunit RuvA (204 aa).

Residues 1–64 are domain I; sequence MIGRLRGIIL…EDAQLLFGFN (64 aa). Residues 65–143 are domain II; sequence SKPERALFRE…GMHGDLFASD (79 aa). A flexible linker region spans residues 144-155; that stretch reads APFALTSEMPKE. Positions 156–204 are domain III; it reads TANDAEGEAVAALTALGYKPQEASRMIVKVGKPDADCETLIREALRAAI.

Belongs to the RuvA family. In terms of assembly, homotetramer. Forms an RuvA(8)-RuvB(12)-Holliday junction (HJ) complex. HJ DNA is sandwiched between 2 RuvA tetramers; dsDNA enters through RuvA and exits via RuvB. An RuvB hexamer assembles on each DNA strand where it exits the tetramer. Each RuvB hexamer is contacted by two RuvA subunits (via domain III) on 2 adjacent RuvB subunits; this complex drives branch migration. In the full resolvosome a probable DNA-RuvA(4)-RuvB(12)-RuvC(2) complex forms which resolves the HJ.

It is found in the cytoplasm. Functionally, the RuvA-RuvB-RuvC complex processes Holliday junction (HJ) DNA during genetic recombination and DNA repair, while the RuvA-RuvB complex plays an important role in the rescue of blocked DNA replication forks via replication fork reversal (RFR). RuvA specifically binds to HJ cruciform DNA, conferring on it an open structure. The RuvB hexamer acts as an ATP-dependent pump, pulling dsDNA into and through the RuvAB complex. HJ branch migration allows RuvC to scan DNA until it finds its consensus sequence, where it cleaves and resolves the cruciform DNA. The sequence is that of Holliday junction branch migration complex subunit RuvA from Erwinia tasmaniensis (strain DSM 17950 / CFBP 7177 / CIP 109463 / NCPPB 4357 / Et1/99).